The following is a 221-amino-acid chain: 7-cyano-7-deazaguanine synthase (221 aa).

ATP is bound at residue 10–20 (FSGGQDSTTCL). The Zn(2+) site is built by Cys186, Cys195, Cys198, and Cys201.

This sequence belongs to the QueC family. As to quaternary structure, homodimer. Zn(2+) serves as cofactor.

It carries out the reaction 7-carboxy-7-deazaguanine + NH4(+) + ATP = 7-cyano-7-deazaguanine + ADP + phosphate + H2O + H(+). It functions in the pathway purine metabolism; 7-cyano-7-deazaguanine biosynthesis. Catalyzes the ATP-dependent conversion of 7-carboxy-7-deazaguanine (CDG) to 7-cyano-7-deazaguanine (preQ(0)). The sequence is that of 7-cyano-7-deazaguanine synthase from Geobacillus thermodenitrificans (strain NG80-2).